Reading from the N-terminus, the 358-residue chain is MSIKIENLEKHFGSFHALKNINLQFKQNQLTALLGPSGCGKTTLLRIIAGLEFADSGKILFEHRDVTDLSAKDRGVGFVFQHYALFQNMTVYDNVAFGLRVKPRKERPSKEEIQQKVTALLKLVKLDWLANAYPNQLSGGQRQRIALARSLAVQPKVLLLDEPFGALDAQVRKELRRWLRDLHQELNVTSIFVTHDQDEALDVSDRIVVMNQGQIEQIDEPNQIYHAPQTPFVTQFVGDVNVFHGHIDEGNLVIGEFSHKIDPATNTTQPVNNQSATAYIRPYELTISRHADNALATGKITHINAIGFIVRIEIESAQSDQPIEVILTKAAYSQSQYKVNEQIYLVPDKLNLFQQMNI.

The region spanning 3 to 237 (IKIENLEKHF…PQTPFVTQFV (235 aa)) is the ABC transporter domain. An ATP-binding site is contributed by 35 to 42 (GPSGCGKT).

Belongs to the ABC transporter superfamily. Sulfate/tungstate importer (TC 3.A.1.6) family. In terms of assembly, the complex is composed of two ATP-binding proteins (CysA), two transmembrane proteins (CysT and CysW) and a solute-binding protein (CysP).

The protein resides in the cell inner membrane. The enzyme catalyses sulfate(out) + ATP + H2O = sulfate(in) + ADP + phosphate + H(+). The catalysed reaction is thiosulfate(out) + ATP + H2O = thiosulfate(in) + ADP + phosphate + H(+). Its function is as follows. Part of the ABC transporter complex CysAWTP involved in sulfate/thiosulfate import. Responsible for energy coupling to the transport system. The chain is Sulfate/thiosulfate import ATP-binding protein CysA from Mannheimia succiniciproducens (strain KCTC 0769BP / MBEL55E).